Consider the following 538-residue polypeptide: Bifunctional purine biosynthesis protein PurH (538 aa).

In terms of domain architecture, MGS-like spans 6–158 (KHIPAPDLHR…KNHAYVATVV (153 aa)).

Belongs to the PurH family.

It catalyses the reaction (6R)-10-formyltetrahydrofolate + 5-amino-1-(5-phospho-beta-D-ribosyl)imidazole-4-carboxamide = 5-formamido-1-(5-phospho-D-ribosyl)imidazole-4-carboxamide + (6S)-5,6,7,8-tetrahydrofolate. The enzyme catalyses IMP + H2O = 5-formamido-1-(5-phospho-D-ribosyl)imidazole-4-carboxamide. It functions in the pathway purine metabolism; IMP biosynthesis via de novo pathway; 5-formamido-1-(5-phospho-D-ribosyl)imidazole-4-carboxamide from 5-amino-1-(5-phospho-D-ribosyl)imidazole-4-carboxamide (10-formyl THF route): step 1/1. The protein operates within purine metabolism; IMP biosynthesis via de novo pathway; IMP from 5-formamido-1-(5-phospho-D-ribosyl)imidazole-4-carboxamide: step 1/1. The polypeptide is Bifunctional purine biosynthesis protein PurH (Brucella melitensis biotype 2 (strain ATCC 23457)).